Reading from the N-terminus, the 122-residue chain is Small ribosomal subunit protein bS6 (122 aa).

Belongs to the bacterial ribosomal protein bS6 family.

Functionally, binds together with bS18 to 16S ribosomal RNA. The chain is Small ribosomal subunit protein bS6 from Trichlorobacter lovleyi (strain ATCC BAA-1151 / DSM 17278 / SZ) (Geobacter lovleyi).